We begin with the raw amino-acid sequence, 471 residues long: Light-independent protochlorophyllide reductase subunit N (471 aa).

[4Fe-4S] cluster-binding residues include C22, C47, and C107.

The protein belongs to the BchN/ChlN family. As to quaternary structure, protochlorophyllide reductase is composed of three subunits; ChlL, ChlN and ChlB. Forms a heterotetramer of two ChlB and two ChlN subunits. The cofactor is [4Fe-4S] cluster.

It is found in the plastid. It localises to the chloroplast. The catalysed reaction is chlorophyllide a + oxidized 2[4Fe-4S]-[ferredoxin] + 2 ADP + 2 phosphate = protochlorophyllide a + reduced 2[4Fe-4S]-[ferredoxin] + 2 ATP + 2 H2O. It functions in the pathway porphyrin-containing compound metabolism; chlorophyll biosynthesis (light-independent). Component of the dark-operative protochlorophyllide reductase (DPOR) that uses Mg-ATP and reduced ferredoxin to reduce ring D of protochlorophyllide (Pchlide) to form chlorophyllide a (Chlide). This reaction is light-independent. The NB-protein (ChlN-ChlB) is the catalytic component of the complex. In Anthoceros angustus (Hornwort), this protein is Light-independent protochlorophyllide reductase subunit N.